A 662-amino-acid polypeptide reads, in one-letter code: Portal protein (662 aa).

Polar residues predominate over residues 1–26; that stretch reads MHRASANSPLNSVSGSMMWRNQSSGR. The disordered stretch occupies residues 1–35; that stretch reads MHRASANSPLNSVSGSMMWRNQSSGRRPSKRLSDN.

It belongs to the herpesviridae portal protein family. In terms of assembly, homododecamerizes. Interacts with terminase subunits TRM1 and TRM3.

The protein resides in the virion. Its subcellular location is the host nucleus. Forms a portal in the viral capsid through which viral DNA is translocated during DNA packaging. Assembles as a dodecamer at a single fivefold axe of the T=16 icosahedric capsid. Binds to the molecular motor that translocates the viral DNA, termed terminase. The polypeptide is Portal protein (U76) (Human herpesvirus 6B (strain Z29) (HHV-6 variant B)).